The following is a 215-amino-acid chain: MHDEEKKEPKWVTAVSIAGRIAGMGLAVAAAVLMSTASQCTVYYAAPAASAYGGAARARTVTYSDFPPFVFLVGAASIAAFLEAIAIFLVVWKKGKDKTTKVLMPLLGVAVPALLYSATGAAFAAVSDMSYCSANGKRVSICAGSAAAGGGVSGGTNFCSQVHIAVYLSLAAAVAVSVAEVVRGLGGSASGGGSDSDSSSSSESGGCDHGCHHKH.

Over 1 to 13 the chain is Cytoplasmic; that stretch reads MHDEEKKEPKWVT. A helical transmembrane segment spans residues 14–34; that stretch reads AVSIAGRIAGMGLAVAAAVLM. The Extracellular segment spans residues 35–68; the sequence is STASQCTVYYAAPAASAYGGAARARTVTYSDFPP. A helical transmembrane segment spans residues 69-89; the sequence is FVFLVGAASIAAFLEAIAIFL. The Cytoplasmic portion of the chain corresponds to 90–105; it reads VVWKKGKDKTTKVLMP. The chain crosses the membrane as a helical span at residues 106-126; sequence LLGVAVPALLYSATGAAFAAV. Residues 127 to 161 are Extracellular-facing; it reads SDMSYCSANGKRVSICAGSAAAGGGVSGGTNFCSQ. The helical transmembrane segment at 162 to 182 threads the bilayer; that stretch reads VHIAVYLSLAAAVAVSVAEVV. The Cytoplasmic segment spans residues 183–215; the sequence is RGLGGSASGGGSDSDSSSSSESGGCDHGCHHKH. The segment at 187–215 is disordered; it reads GSASGGGSDSDSSSSSESGGCDHGCHHKH. Over residues 195 to 205 the composition is skewed to low complexity; sequence DSDSSSSSESG.

It belongs to the Casparian strip membrane proteins (CASP) family. As to quaternary structure, homodimer and heterodimers.

It is found in the cell membrane. This is CASP-like protein 1U3 from Sorghum bicolor (Sorghum).